The following is a 380-amino-acid chain: Crotonobetainyl-CoA reductase (380 aa).

It belongs to the acyl-CoA dehydrogenase family. In terms of assembly, homotetramer. Requires FAD as cofactor.

Its subcellular location is the cytoplasm. The catalysed reaction is 4-(trimethylamino)butanoyl-CoA + oxidized [electron-transfer flavoprotein] + H(+) = crotonobetainyl-CoA + reduced [electron-transfer flavoprotein]. It functions in the pathway amine and polyamine metabolism; carnitine metabolism. In terms of biological role, catalyzes the reduction of crotonobetainyl-CoA to gamma-butyrobetainyl-CoA. The polypeptide is Crotonobetainyl-CoA reductase (Escherichia coli O6:K15:H31 (strain 536 / UPEC)).